Reading from the N-terminus, the 344-residue chain is Dihydroorotate dehydrogenase (quinone) (344 aa).

Residues 65–69 (AGLDK) and Thr89 each bind FMN. Lys69 provides a ligand contact to substrate. 114 to 118 (NRMGF) lines the substrate pocket. The FMN site is built by Asn145 and Asn178. Asn178 contributes to the substrate binding site. Ser181 acts as the Nucleophile in catalysis. Asn183 is a binding site for substrate. FMN-binding residues include Lys223 and Thr251. A substrate-binding site is contributed by 252–253 (NT). FMN-binding positions include Gly274, Gly303, and 324–325 (YS).

This sequence belongs to the dihydroorotate dehydrogenase family. Type 2 subfamily. As to quaternary structure, monomer. The cofactor is FMN.

It is found in the cell membrane. It catalyses the reaction (S)-dihydroorotate + a quinone = orotate + a quinol. It functions in the pathway pyrimidine metabolism; UMP biosynthesis via de novo pathway; orotate from (S)-dihydroorotate (quinone route): step 1/1. In terms of biological role, catalyzes the conversion of dihydroorotate to orotate with quinone as electron acceptor. The protein is Dihydroorotate dehydrogenase (quinone) of Cupriavidus taiwanensis (strain DSM 17343 / BCRC 17206 / CCUG 44338 / CIP 107171 / LMG 19424 / R1) (Ralstonia taiwanensis (strain LMG 19424)).